The primary structure comprises 421 residues: Gamma-glutamyl phosphate reductase (421 aa).

This sequence belongs to the gamma-glutamyl phosphate reductase family.

It localises to the cytoplasm. It catalyses the reaction L-glutamate 5-semialdehyde + phosphate + NADP(+) = L-glutamyl 5-phosphate + NADPH + H(+). It participates in amino-acid biosynthesis; L-proline biosynthesis; L-glutamate 5-semialdehyde from L-glutamate: step 2/2. Its function is as follows. Catalyzes the NADPH-dependent reduction of L-glutamate 5-phosphate into L-glutamate 5-semialdehyde and phosphate. The product spontaneously undergoes cyclization to form 1-pyrroline-5-carboxylate. In Azotobacter vinelandii (strain DJ / ATCC BAA-1303), this protein is Gamma-glutamyl phosphate reductase.